The sequence spans 387 residues: Cysteine desulfurase IscS (387 aa).

Pyridoxal 5'-phosphate is bound by residues 73–74, Asn-155, Gln-183, and 203–205; these read AT and SAH. Position 206 is an N6-(pyridoxal phosphate)lysine (Lys-206). Thr-241 serves as a coordination point for pyridoxal 5'-phosphate. Residue Cys-328 is the Cysteine persulfide intermediate of the active site. Cys-328 lines the [2Fe-2S] cluster pocket.

The protein belongs to the class-V pyridoxal-phosphate-dependent aminotransferase family. NifS/IscS subfamily. Homodimer. Forms a heterotetramer with IscU, interacts with other sulfur acceptors. Pyridoxal 5'-phosphate is required as a cofactor.

The protein localises to the cytoplasm. The enzyme catalyses (sulfur carrier)-H + L-cysteine = (sulfur carrier)-SH + L-alanine. It participates in cofactor biosynthesis; iron-sulfur cluster biosynthesis. In terms of biological role, master enzyme that delivers sulfur to a number of partners involved in Fe-S cluster assembly, tRNA modification or cofactor biosynthesis. Catalyzes the removal of elemental sulfur atoms from cysteine to produce alanine. Functions as a sulfur delivery protein for Fe-S cluster synthesis onto IscU, an Fe-S scaffold assembly protein, as well as other S acceptor proteins. This chain is Cysteine desulfurase IscS, found in Helicobacter pylori (strain J99 / ATCC 700824) (Campylobacter pylori J99).